Here is a 55-residue protein sequence, read N- to C-terminus: Chromatin protein Cren7 (55 aa).

The protein belongs to the Cren7 family. As to quaternary structure, monomer. Methylated at multiple sites, to varying extents.

It localises to the chromosome. The protein localises to the cytoplasm. A chromatin protein, binds double-stranded DNA without sequence specificity. Constrains negative DNA supercoils. In Ignicoccus hospitalis (strain KIN4/I / DSM 18386 / JCM 14125), this protein is Chromatin protein Cren7.